The sequence spans 318 residues: Taste receptor type 2 member 7 (318 aa).

At 1 to 9 the chain is on the extracellular side; that stretch reads MADKVQTTL. Residues 10-30 traverse the membrane as a helical segment; that stretch reads LFLAVGEFSVGILGNAFIGLV. The Cytoplasmic segment spans residues 31–55; the sequence is NCMDWVKKRKIASIDLILTSLAISR. The chain crosses the membrane as a helical span at residues 56 to 76; that stretch reads ICLLCIILLDCFTLVLYPDVY. The Extracellular segment spans residues 77–94; that stretch reads ATGKEMRIIDFFWTLTNH. Residues 95 to 115 form a helical membrane-spanning segment; it reads LSIWFATCLSIYYFFKIGNFF. Over 116 to 128 the chain is Cytoplasmic; sequence HPLFLWMKWRIDR. The chain crosses the membrane as a helical span at residues 129–149; that stretch reads VISWILLGCVVLSVFISLPAT. Residues 150–187 lie on the Extracellular side of the membrane; sequence ENLNADFRFCVKAKRKTNLTWSCRVNKTQHASTKLFLN. Residues Asn-167 and Asn-175 are each glycosylated (N-linked (GlcNAc...) asparagine). Residues 188 to 208 form a helical membrane-spanning segment; that stretch reads LATLLPFCVCLMSFFLLILSL. Residues 209 to 235 lie on the Cytoplasmic side of the membrane; it reads RRHIRRMQLSATGCRDPSTEAHVRALK. Residues 236–256 form a helical membrane-spanning segment; the sequence is AVISFLLLFIAYYLSFLIATS. Over 257-266 the chain is Extracellular; the sequence is SYFMPETELA. Residues 267-287 form a helical membrane-spanning segment; the sequence is VIFGESIALIYPSSHSFILIL. Residues 288 to 318 are Cytoplasmic-facing; sequence GNNKLRYVSLKVIWKVMSILKGRKFQQHKQI.

Belongs to the G-protein coupled receptor T2R family.

It is found in the membrane. In terms of biological role, gustducin-coupled receptor implicated in the perception of bitter compounds in the oral cavity and the gastrointestinal tract. Signals through PLCB2 and the calcium-regulated cation channel TRPM5. This chain is Taste receptor type 2 member 7 (TAS2R7), found in Gorilla gorilla gorilla (Western lowland gorilla).